Consider the following 507-residue polypeptide: MRRHLQWSIKQLTSSYADGQLSPRRVTEQALEDSVNLKTLNAFVRLTPEEARQQAQQSEQRYQKKQPSSGLDGVTIAIKDNFCTENVHTTCASRMLQDFVPPYDATVCSRLRQAGAVLLGKTNMDQFAMGAGTVDSIYGPTKNIWSEDLTQNNWRIAGGSSGGSASAVAAGLCFAGIGSDTGGSTRNPASYCGVVGLKPTYGLVSRHGLIPLVNSMDVPGILARSVSDCVEVLNAVAGPDGKDSTTIRQPFTKLQLPEVDGLDLQTVRIGIPKEYHCNGLSAEVLETWTKVADLLECAGASVQQVSLPNTAASIFVYSILNQCEVASNMARYDGIEFGHRAADERSTEQLYAQSRAEGFNDVVKTRILTGNFLLLRKNYDHYFEKALRVRRLIAEDFLKVFEAPSKEDRVDILLTPTTLTEAPLYKDFSSLSNRDQCAVQDFCTQPANMAGIPAVSIPIRLSRSGLPLSLQLMSRSLNEQLLLSVARWIEAQVAFDSLDHRLEQKLS.

Catalysis depends on charge relay system residues Lys79 and Ser160. Ser184 (acyl-ester intermediate) is an active-site residue.

Belongs to the amidase family. GatA subfamily. As to quaternary structure, subunit of the heterotrimeric GatCAB amidotransferase (AdT) complex, composed of A, B and C subunits.

The protein resides in the mitochondrion. It carries out the reaction L-glutamyl-tRNA(Gln) + L-glutamine + ATP + H2O = L-glutaminyl-tRNA(Gln) + L-glutamate + ADP + phosphate + H(+). Functionally, allows the formation of correctly charged Gln-tRNA(Gln) through the transamidation of misacylated Glu-tRNA(Gln) in the mitochondria. The reaction takes place in the presence of glutamine and ATP through an activated gamma-phospho-Glu-tRNA(Gln). The protein is Glutamyl-tRNA(Gln) amidotransferase subunit A, mitochondrial of Drosophila pseudoobscura pseudoobscura (Fruit fly).